Consider the following 132-residue polypeptide: Matrix protein (132 aa).

It localises to the virion membrane. Functionally, envelope protein that may play a role in host-cell attachment and viral genome entry. The protein is Matrix protein of Halorubrum pleomorphic virus 1 (HRPV-1).